Reading from the N-terminus, the 178-residue chain is Cytidylate kinase (178 aa).

7–15 (GLPGTGTTT) lines the ATP pocket.

Belongs to the cytidylate kinase family. Type 2 subfamily.

It is found in the cytoplasm. The enzyme catalyses CMP + ATP = CDP + ADP. It catalyses the reaction dCMP + ATP = dCDP + ADP. The sequence is that of Cytidylate kinase from Methanococcus maripaludis (strain C7 / ATCC BAA-1331).